Here is a 324-residue protein sequence, read N- to C-terminus: Glutathione synthetase (324 aa).

The 188-residue stretch at 125-312 folds into the ATP-grasp domain; that stretch reads EKLFTTTHFP…ISTIILDNLE (188 aa). 152-209 lines the ATP pocket; the sequence is FIKTYKDIIIKPLHGMAGLSIFRIKEHDPNTSVIIETMTKYETIPCISQNYITDIQKG. Positions 283 and 285 each coordinate Mg(2+).

Belongs to the prokaryotic GSH synthase family. The cofactor is Mg(2+). Mn(2+) serves as cofactor.

The catalysed reaction is gamma-L-glutamyl-L-cysteine + glycine + ATP = glutathione + ADP + phosphate + H(+). It functions in the pathway sulfur metabolism; glutathione biosynthesis; glutathione from L-cysteine and L-glutamate: step 2/2. In Buchnera aphidicola subsp. Baizongia pistaciae (strain Bp), this protein is Glutathione synthetase.